Here is a 451-residue protein sequence, read N- to C-terminus: UDP-N-acetylmuramoylalanine--D-glutamate ligase (451 aa).

120 to 126 (GSNGKTT) contacts ATP.

Belongs to the MurCDEF family.

The protein localises to the cytoplasm. It catalyses the reaction UDP-N-acetyl-alpha-D-muramoyl-L-alanine + D-glutamate + ATP = UDP-N-acetyl-alpha-D-muramoyl-L-alanyl-D-glutamate + ADP + phosphate + H(+). It functions in the pathway cell wall biogenesis; peptidoglycan biosynthesis. Functionally, cell wall formation. Catalyzes the addition of glutamate to the nucleotide precursor UDP-N-acetylmuramoyl-L-alanine (UMA). This Bacillus pumilus (strain SAFR-032) protein is UDP-N-acetylmuramoylalanine--D-glutamate ligase.